A 254-amino-acid chain; its full sequence is 4-hydroxy-tetrahydrodipicolinate reductase (254 aa).

Residues Gly-8–Met-13, Gly-87–Thr-89, and Ala-111–Met-114 each bind NAD(+). The Proton donor/acceptor role is filled by His-143. His-144 is a binding site for (S)-2,3,4,5-tetrahydrodipicolinate. The active-site Proton donor is Lys-147. Gly-153–Thr-154 contacts (S)-2,3,4,5-tetrahydrodipicolinate.

It belongs to the DapB family.

The protein resides in the cytoplasm. The catalysed reaction is (S)-2,3,4,5-tetrahydrodipicolinate + NAD(+) + H2O = (2S,4S)-4-hydroxy-2,3,4,5-tetrahydrodipicolinate + NADH + H(+). It catalyses the reaction (S)-2,3,4,5-tetrahydrodipicolinate + NADP(+) + H2O = (2S,4S)-4-hydroxy-2,3,4,5-tetrahydrodipicolinate + NADPH + H(+). It functions in the pathway amino-acid biosynthesis; L-lysine biosynthesis via DAP pathway; (S)-tetrahydrodipicolinate from L-aspartate: step 4/4. Functionally, catalyzes the conversion of 4-hydroxy-tetrahydrodipicolinate (HTPA) to tetrahydrodipicolinate. This Campylobacter fetus subsp. fetus (strain 82-40) protein is 4-hydroxy-tetrahydrodipicolinate reductase.